The sequence spans 230 residues: Prolactin-6A1 (230 aa).

The N-terminal stretch at 1 to 29 is a signal peptide; the sequence is MLSLSQPCFSGTLLMLLASNFLLWKNVAP. N-linked (GlcNAc...) asparagine glycosylation is present at Asn57. 2 disulfide bridges follow: Cys89–Cys205 and Cys222–Cys230.

This sequence belongs to the somatotropin/prolactin family. As to expression, expressed in both placenta and decidual tissues. Detected first in deciduals cells early in gestation and in trophoblasts later in pregnancy.

It is found in the secreted. This chain is Prolactin-6A1 (Prl6a1), found in Mus musculus (Mouse).